A 207-amino-acid chain; its full sequence is Protein GrpE (207 aa).

This sequence belongs to the GrpE family. As to quaternary structure, homodimer.

The protein localises to the cytoplasm. In terms of biological role, participates actively in the response to hyperosmotic and heat shock by preventing the aggregation of stress-denatured proteins, in association with DnaK and GrpE. It is the nucleotide exchange factor for DnaK and may function as a thermosensor. Unfolded proteins bind initially to DnaJ; upon interaction with the DnaJ-bound protein, DnaK hydrolyzes its bound ATP, resulting in the formation of a stable complex. GrpE releases ADP from DnaK; ATP binding to DnaK triggers the release of the substrate protein, thus completing the reaction cycle. Several rounds of ATP-dependent interactions between DnaJ, DnaK and GrpE are required for fully efficient folding. The chain is Protein GrpE from Pelodictyon phaeoclathratiforme (strain DSM 5477 / BU-1).